We begin with the raw amino-acid sequence, 265 residues long: 5'-nucleotidase SurE (265 aa).

Positions 8, 9, 40, and 98 each coordinate a divalent metal cation.

Belongs to the SurE nucleotidase family. Requires a divalent metal cation as cofactor.

Its subcellular location is the cytoplasm. It catalyses the reaction a ribonucleoside 5'-phosphate + H2O = a ribonucleoside + phosphate. In terms of biological role, nucleotidase that shows phosphatase activity on nucleoside 5'-monophosphates. The protein is 5'-nucleotidase SurE of Nostoc sp. (strain PCC 7120 / SAG 25.82 / UTEX 2576).